The chain runs to 1793 residues: Nucleoporin NUP145 (1793 aa).

9 GLFG repeats span residues 50-53 (GLFG), 143-146 (GLFG), 255-258 (GLFG), 282-285 (GLFG), 292-295 (GLFG), 306-309 (GLFG), 336-339 (GLFG), 381-384 (GLFG), and 395-398 (GLFG). Disordered regions lie at residues 404–583 (GSAF…QQPQ), 740–859 (RTDL…EPGA), 999–1043 (GDDD…DDTF), and 1066–1097 (EVANHAQRQGTLSPEPQDADTPLPSREWPEDE). The segment covering 417 to 431 (NQSTGTSLFGNTQQK) has biased composition (polar residues). GLFG repeat units follow at residues 434-437 (GLFG), 446-449 (GLFG), 470-473 (GLFG), 481-484 (GLFG), and 496-499 (GLFG). The segment covering 437–459 (GSTTTNTSGGLFGSTNTGTSTFG) has biased composition (low complexity). Residues 467-483 (TGGGLFGSKPAGTGGLF) show a composition bias toward gly residues. Polar residues predominate over residues 500–511 (NLNTNAQTQQPA). One copy of the GLFG 15 repeat lies at 514-517 (GLFG). The segment covering 518 to 535 (NLGQNNQAKPSLFGTSTT) has biased composition (low complexity). The stretch at 539–542 (GLFG) is one GLFG 16 repeat. 2 stretches are compositionally biased toward polar residues: residues 546–575 (AQQQTGSLFGTSTAQQQPQTGLGASLFGSS) and 801–813 (STANGTNGANGAK). Over residues 814–823 (SSPVAAASPP) the composition is skewed to low complexity. Basic and acidic residues predominate over residues 826–840 (EQVKGKELAVVHEEE). In terms of domain architecture, Peptidase S59 spans 857-993 (PGAYWMSPTA…GVWAFSVEHF (137 aa)). Positions 859–992 (AYWMSPTADD…TGVWAFSVEH (134 aa)) are nucleoporin RNA-binding motif (NRM). Residues 999–1013 (GDDDDYDDDDYETEP) are compositionally biased toward acidic residues. Positions 1025-1037 (TSPSISKSSTSPI) are enriched in low complexity.

This sequence belongs to the nucleoporin GLFG family. As to quaternary structure, component of the nuclear pore complex (NPC). NPC constitutes the exclusive means of nucleocytoplasmic transport. NPCs allow the passive diffusion of ions and small molecules and the active, nuclear transport receptor-mediated bidirectional transport of macromolecules such as proteins, RNAs, ribonucleoparticles (RNPs), and ribosomal subunits across the nuclear envelope. Due to its 8-fold rotational symmetry, all subunits are present with 8 copies or multiples thereof. Post-translationally, NUP145 is autocatalytically cleaved in NUP145N and NUP145C.

Its subcellular location is the nucleus. The protein localises to the nuclear pore complex. The protein resides in the nucleus membrane. Its function is as follows. Functions as a component of the nuclear pore complex (NPC). NPC components, collectively referred to as nucleoporins (NUPs), can play the role of both NPC structural components and of docking or interaction partners for transiently associated nuclear transport factors. Active directional transport is assured by both, a Phe-Gly (FG) repeat affinity gradient for these transport factors across the NPC and a transport cofactor concentration gradient across the nuclear envelope. NUP145 is autocatalytically cleaved in vivo in 2 polypeptides which assume different functions in the NPC. NUP145N as one of the FG repeat nucleoporins participates in karyopherin interactions and contains part of the autocatalytic cleavage activity. NUP145C as part of the NUP84 complex is involved in nuclear poly(A)+ RNA and tRNA export. In Chaetomium thermophilum (strain DSM 1495 / CBS 144.50 / IMI 039719) (Thermochaetoides thermophila), this protein is Nucleoporin NUP145 (NUP145).